A 434-amino-acid chain; its full sequence is Methylenetetrahydrofolate--tRNA-(uracil-5-)-methyltransferase TrmFO (434 aa).

Residue G9 to G14 coordinates FAD.

It belongs to the MnmG family. TrmFO subfamily. Requires FAD as cofactor.

The protein localises to the cytoplasm. It carries out the reaction uridine(54) in tRNA + (6R)-5,10-methylene-5,6,7,8-tetrahydrofolate + NADH + H(+) = 5-methyluridine(54) in tRNA + (6S)-5,6,7,8-tetrahydrofolate + NAD(+). The catalysed reaction is uridine(54) in tRNA + (6R)-5,10-methylene-5,6,7,8-tetrahydrofolate + NADPH + H(+) = 5-methyluridine(54) in tRNA + (6S)-5,6,7,8-tetrahydrofolate + NADP(+). Catalyzes the folate-dependent formation of 5-methyl-uridine at position 54 (M-5-U54) in all tRNAs. This is Methylenetetrahydrofolate--tRNA-(uracil-5-)-methyltransferase TrmFO from Geobacter sulfurreducens (strain ATCC 51573 / DSM 12127 / PCA).